Reading from the N-terminus, the 261-residue chain is MTKVQYKHTEIAVKKKLGQNFLTDRNTIRKIVQSAEIQPGDHVVEIGPGFGALTSAILEVCPSFTAVEKDRKLADFIREEYPSVNLVESDILEVDFAKLAEEGPVKVMGNIPYSITSPILFKLLENRSHIISETLMMQHEVALRLAANPGTKEYGILAVQLQTFCDVRYLFKVGKKVFRPRPEVDSAVVRIVPKKTPLDDCETEFRRFVRLAFQQRRKTLQNNLKQHYDISQLSASELQRRAESFTITEFEMLFSRIRPLQ.

6 residues coordinate S-adenosyl-L-methionine: asparagine 20, leucine 22, glycine 47, glutamate 68, aspartate 90, and asparagine 110.

Belongs to the class I-like SAM-binding methyltransferase superfamily. rRNA adenine N(6)-methyltransferase family. RsmA subfamily.

The protein resides in the cytoplasm. It carries out the reaction adenosine(1518)/adenosine(1519) in 16S rRNA + 4 S-adenosyl-L-methionine = N(6)-dimethyladenosine(1518)/N(6)-dimethyladenosine(1519) in 16S rRNA + 4 S-adenosyl-L-homocysteine + 4 H(+). Specifically dimethylates two adjacent adenosines (A1518 and A1519) in the loop of a conserved hairpin near the 3'-end of 16S rRNA in the 30S particle. May play a critical role in biogenesis of 30S subunits. The polypeptide is Ribosomal RNA small subunit methyltransferase A (Prosthecochloris aestuarii (strain DSM 271 / SK 413)).